A 469-amino-acid chain; its full sequence is MKKLAKMISIATLGACAFSAHALDGKLVPNEGVLVSVGQDVDSVNDYSSAMSTTPAGVTNYVGIVNLDGLASNADAGAGRNNVVELANLYPTSALIVGVSMNGQIQNVAQGQYNANIDTLIQTLGELDRPVYLRWAYEVDGPWNGHNTEDLKQSFRNVYQRIRELGYGDNISMIWQVASYCPTAPGQLSSWWPGDDVVDWVGLSYFAPQDCNWDRVNEAAQWARSHNKPLFINESSPQRYQLADRTYSSDPAKGTNRQSKTEQQIWSEWFAPYFQFMEDNKDILKGFTYINADWDSQWRWAAPYNEGYWGDSRVQVLPYIKQQWQDTLENPKFINHSSDLFAKLGYVADGGDNGGDNGGDNGGDNGGDNGGDNGGTEPPENCQDDFNFNYVSDQEIEVYHVDKGWSAGWNYVCLNDYCLPGNKSNGAFRKTFNAVLGQDYKLTFKVEDRYGQGQQILDRNITFTTQVCN.

Residues 1–22 (MKKLAKMISIATLGACAFSAHA) form the signal peptide. Residues 23-293 (LDGKLVPNEG…LKGFTYINAD (271 aa)) form the GH26 domain. Glu138 functions as the Proton donor in the catalytic mechanism. Catalysis depends on Glu234, which acts as the Nucleophile. Residues 352 to 374 (DNGGDNGGDNGGDNGGDNGGDNG) are compositionally biased toward gly residues. The segment at 352–380 (DNGGDNGGDNGGDNGGDNGGDNGGTEPPE) is disordered. The segment at 377-469 (EPPENCQDDF…NITFTTQVCN (93 aa)) is carbohydrate binding module (CBM). 2 cysteine pairs are disulfide-bonded: Cys382–Cys468 and Cys413–Cys418.

The protein belongs to the glycosyl hydrolase 26 family.

It carries out the reaction Random hydrolysis of (1-&gt;3)-beta-D-glycosidic linkages in (1-&gt;3)-beta-D-xylans.. With respect to regulation, completely inhibited by CuCl(2), FeCl(3), HgCl(2) and N-bromosuccinimide. Moderately inhibited by AgCl, AlCl(3), Pb(CH(3)COO)(2) and dithiothreitol. BaCl(2), CaCl(2), KCl, MgCl(2), MnCl(2), NaCl, ZnCl(2), ethylenediaminetetraacetic acid, N-ethylmaleimide, iodoacetic acid and p-chloromercuribenzoic acid have little or no effect on activity. Functionally, catalyzes the hydrolysis of beta-1,3-xylan into oligosaccharides, mainly xylotriose and xylobiose with smaller amounts of xylotetraose, xylose, xylopentaose and xylohexaose. Does not hydrolyze xylobiose, p-nitrophenyl-beta-xyloside, beta-1,4-xylan, carboxymethylcellulose, curdlan, glucomannan or beta-1,4-mannan. In Alcaligenes sp, this protein is Beta-1,3-xylanase.